The sequence spans 492 residues: MKIDMRNISKSFGTNKVLEKIDLELQSGQIHALMGENGAGKSTLMNILTGLFPASTGTIYIDGEERTFSNPQEAEEFGISFIHQEMNTWPEMTVLENLFLGREIKTTFGLLNQKLMRQKALEAFKRLGVTIPLDIPIGNLSVGQQQMIEIAKSLLNQLSILVMDEPTAALTDRETENLFRVIRSLKQEGVGIVYISHRMEEIFKITDFVTVMRDGVIVDTKETSLTNSDELVKKMVGRKLEDYYPEKHSEIGPVAFEVSNLCGDNFEDVSFYVRKGEILGFSGLMGAGRTEVMRTIFGIDKKKSGKVKIDNQEITITSPSQAIKQGIGFLTENRKDEGLILDFNIKDNMTLPSTKDFSKHGFFDEKTRTTFVQQLINRLYIKSGRPDLEVGNLSGGNQQKVVLAKWIGIAPKVLILDEPTRGVDVGAKREIYQLMNELADRGVPIVMVSSDLPEILGVSDRIMVMHEGRISGELSRKEADQEKVMQLATGGK.

2 ABC transporter domains span residues 3 to 239 and 238 to 492; these read IDMR…VGRK and RKLE…TGGK. An ATP-binding site is contributed by 35–42; the sequence is GENGAGKS.

The protein belongs to the ABC transporter superfamily. Ribose importer (TC 3.A.1.2.1) family. In terms of assembly, the complex is composed of an ATP-binding protein (RbsA), two transmembrane proteins (RbsC) and a solute-binding protein (RbsB).

It localises to the cell membrane. The catalysed reaction is D-ribose(out) + ATP + H2O = D-ribose(in) + ADP + phosphate + H(+). In terms of biological role, part of the ABC transporter complex RbsABC involved in ribose import. Responsible for energy coupling to the transport system. The chain is Ribose import ATP-binding protein RbsA from Streptococcus agalactiae serotype III (strain NEM316).